The following is a 476-amino-acid chain: F-box protein At5g07670 (476 aa).

One can recognise an F-box domain in the interval 59-111; sequence PDFTLLLPDLILIRVIQKIPNSQRKNLSLVCKRWFRLHGRLVRSFKVSDWEFL.

The protein is F-box protein At5g07670 of Arabidopsis thaliana (Mouse-ear cress).